The chain runs to 418 residues: NADH-quinone oxidoreductase subunit D (418 aa).

This sequence belongs to the complex I 49 kDa subunit family. As to quaternary structure, NDH-1 is composed of 14 different subunits. Subunits NuoB, C, D, E, F, and G constitute the peripheral sector of the complex.

Its subcellular location is the cell inner membrane. It catalyses the reaction a quinone + NADH + 5 H(+)(in) = a quinol + NAD(+) + 4 H(+)(out). NDH-1 shuttles electrons from NADH, via FMN and iron-sulfur (Fe-S) centers, to quinones in the respiratory chain. The immediate electron acceptor for the enzyme in this species is believed to be ubiquinone. Couples the redox reaction to proton translocation (for every two electrons transferred, four hydrogen ions are translocated across the cytoplasmic membrane), and thus conserves the redox energy in a proton gradient. This chain is NADH-quinone oxidoreductase subunit D, found in Bordetella pertussis (strain Tohama I / ATCC BAA-589 / NCTC 13251).